Reading from the N-terminus, the 1172-residue chain is MLWALALLALGIGPRASAGDHVKDTSFDLFSISNINRKTIGAKQFRGPDPGVPAYRFVRFDYIPPVNTDDLNRIVKLARRKEGFFLTAQLKQDRKSRGTLLVLEGPGTSQRQFEIVSNGPGDTLDLNYWVEGNQHTNFLEDVGLADSQWKNVTVQVASDTYSLYVGCDLIDSVTLEEPFYEQLEVDRSRMYVAKGASRESHFRGLLQNVHLVFADSVEDILSKKGCQHSQGAEVNTISEHTETLHLSPHITTDLVVQGVEKAQEVCTHSCEELSNMMNELSGLHVMVNQLSKNLERVSSDNQFLLELIGGPLKTRNMSACVQEGRIFAENETWVVDSCTTCTCKKFKTVCHQITCSPATCANPSFVEGECCPSCSHSADSDEGWSPWAEWTECSVTCGSGTQQRGRSCDVTSNTCLGPSIQTRTCSLGKCDTRIRQNGGWSHWSPWSSCSVTCGVGNVTRIRLCNSPVPQMGGKNCKGSGRETKPCQRDPCPIDGRWSPWSPWSACTVTCAGGIRERSRVCNSPEPQYGGKDCVGDVTEHQMCNKRSCPIDGCLSNPCFPGAKCNSFPDGSWSCGSCPVGFLGNGTHCEDLDECAVVTDICFSTNKAPRCVNTNPGFHCLPCPPRYKGNQPFGVGLEDARTEKQVCEPENPCKDKTHSCHKNAECIYLGHFSDPMYKCECQIGYAGDGLICGEDSDLDGWPNNNLVCATNATYHCIKDNCPKLPNSGQEDFDKDGIGDACDEDDDNDGVSDEKDNCQLLFNPRQLDYDKDEVGDRCDNCPYVHNPAQIDTDNNGEGDACSVDIDGDDVFNERDNCPYVYNTDQRDTDGDGVGDHCDNCPLMHNPDQIDQDNDLVGDQCDNNEDIDDDGHQNNQDNCPYISNSNQADHDNDGKGDACDSDDDNDGVPDDRDNCRLVFNPDQEDSDGDGRGDICKDDFDNDNVPDIDDVCPENNAITETDFRNFQMVPLDPKGTTQIDPNWVIRHQGKELVQTANSDPGIAVGFDEFGSVDFSGTFYVNTDRDDDYAGFVFGYQSSSRFYVVMWKQVTQTYWEDKPSRAYGYSGVSLKVVNSTTGTGEHLRNALWHTGNTEGQVRTLWHDPKNIGWKDYTAYRWHLIHRPKTGYMRVLVHEGKQVMADSGPIYDQTYAGGRLGLFVFSQEMVYFSDLKYECRDA.

Residues 1 to 18 (MLWALALLALGIGPRASA) form the signal peptide. One can recognise a Laminin G-like domain in the interval 19-215 (GDHVKDTSFD…LQNVHLVFAD (197 aa)). A heparin-binding region spans residues 19-232 (GDHVKDTSFD…KKGCQHSQGA (214 aa)). 3 N-linked (GlcNAc...) asparagine glycosylation sites follow: Asn-151, Asn-316, and Asn-330. A VWFC domain is found at 318–375 (SACVQEGRIFAENETWVVDSCTTCTCKKFKTVCHQITCSPATCANPSFVEGECCPSCS). TSP type-1 domains lie at 381 to 431 (DEGW…GKCD), 437 to 492 (NGGW…DPCP), and 494 to 549 (DGRW…RSCP). 27 disulfide bridges follow: Cys-393–Cys-425, Cys-397–Cys-430, Cys-408–Cys-415, Cys-449–Cys-486, Cys-453–Cys-491, Cys-464–Cys-476, Cys-506–Cys-543, Cys-510–Cys-548, Cys-521–Cys-533, Cys-553–Cys-564, Cys-558–Cys-574, Cys-577–Cys-588, Cys-594–Cys-610, Cys-601–Cys-619, Cys-622–Cys-646, Cys-652–Cys-665, Cys-659–Cys-678, Cys-680–Cys-691, Cys-707–Cys-715, Cys-720–Cys-740, Cys-756–Cys-776, Cys-779–Cys-799, Cys-815–Cys-835, Cys-838–Cys-858, Cys-876–Cys-896, Cys-912–Cys-932, and Cys-948–Cys-1169. Residue Asn-457 is glycosylated (N-linked (GlcNAc...) asparagine). One can recognise an EGF-like 1 domain in the interval 549 to 589 (PIDGCLSNPCFPGAKCNSFPDGSWSCGSCPVGFLGNGTHCE). N-linked (GlcNAc...) asparagine glycosylation is present at Asn-584. Residues 648–692 (PENPCKDKTHSCHKNAECIYLGHFSDPMYKCECQIGYAGDGLICG) enclose the EGF-like 2 domain. 8 TSP type-3 repeats span residues 693–728 (EDSD…NSGQ), 729–764 (EDFD…NPRQ), 765–787 (LDYD…NPAQ), 788–823 (IDTD…NTDQ), 824–846 (RDTD…NPDQ), 847–884 (IDQD…NSNQ), 885–920 (ADHD…NPDQ), and 921–956 (EDSD…AITE). N-linked (GlcNAc...) asparagine glycosylation is present at Asn-710. The segment at 727 to 752 (GQEDFDKDGIGDACDEDDDNDGVSDE) is disordered. Acidic residues predominate over residues 739–749 (ACDEDDDNDGV). Residues 846-938 (QIDQDNDLVG…GDICKDDFDN (93 aa)) form a disordered region. Over residues 847–866 (IDQDNDLVGDQCDNNEDIDD) the composition is skewed to acidic residues. Polar residues predominate over residues 870 to 884 (QNNQDNCPYISNSNQ). A compositionally biased stretch (basic and acidic residues) spans 885 to 895 (ADHDNDGKGDA). The span at 896 to 905 (CDSDDDNDGV) shows a compositional bias: acidic residues. Basic and acidic residues predominate over residues 925–935 (GDGRGDICKDD). The Cell attachment site signature appears at 928-930 (RGD). The TSP C-terminal domain occupies 960-1172 (RNFQMVPLDP…SDLKYECRDA (213 aa)). An N-linked (GlcNAc...) asparagine glycan is attached at Asn-1069.

The protein belongs to the thrombospondin family. In terms of assembly, homotrimer; disulfide-linked. Can bind to fibrinogen, fibronectin, laminin and type V collagen. Interacts (via the TSP type I repeats) with CD36; the interaction conveys an antiangiogenic effect. Interacts (via the TSP type I repeats) with HRG; the interaction blocks the antiangiogenic effect of THBS2 with CD36. Can bind to fibrinogen, fibronectin, laminin.

Adhesive glycoprotein that mediates cell-to-cell and cell-to-matrix interactions. Ligand for CD36 mediating antiangiogenic properties. The chain is Thrombospondin-2 (Thbs2) from Mus musculus (Mouse).